We begin with the raw amino-acid sequence, 633 residues long: Putative oligopeptide transporter HI_0561 (633 aa).

15 helical membrane passes run 8-28 (GVTF…LKFF), 45-65 (SAGT…MGYW), 70-90 (FWQT…FTIP), 128-148 (IAYG…LRVM), 180-200 (IGIV…GVAV), 230-250 (IGVG…MKPM), 281-301 (MIYI…HFIA), 311-331 (ILLV…VAAA), 345-365 (PISG…VSIG), 379-399 (FLTA…CISN), 420-440 (VALI…LEIL), 483-503 (WTYI…DAFL), 515-535 (VIAV…VIVG), 564-584 (LFSA…AFII), and 604-624 (WDTI…VIFA).

The protein belongs to the oligopeptide OPT transporter family.

Its subcellular location is the cell membrane. The sequence is that of Putative oligopeptide transporter HI_0561 from Haemophilus influenzae (strain ATCC 51907 / DSM 11121 / KW20 / Rd).